Here is a 423-residue protein sequence, read N- to C-terminus: 26S proteasome regulatory subunit 6A homolog (423 aa).

An ATP-binding site is contributed by 211–218 (GPPGTGKT).

The protein belongs to the AAA ATPase family.

The protein localises to the cytoplasm. It is found in the nucleus. In terms of biological role, the 26S proteasome is involved in the ATP-dependent degradation of ubiquitinated proteins. The regulatory (or ATPase) complex confers ATP dependency and substrate specificity to the 26S complex. The sequence is that of 26S proteasome regulatory subunit 6A homolog (TBP1) from Solanum lycopersicum (Tomato).